The primary structure comprises 468 residues: Glutamate--tRNA ligase (468 aa).

The short motif at 10–20 (PSPTGDLHIGG) is the 'HIGH' region element. Zn(2+)-binding residues include Cys99, Cys101, Cys126, and Asp128. The short motif at 236–240 (RLSKR) is the 'KMSKS' region element. Residue Lys239 participates in ATP binding.

The protein belongs to the class-I aminoacyl-tRNA synthetase family. Glutamate--tRNA ligase type 1 subfamily. As to quaternary structure, monomer. Requires Zn(2+) as cofactor.

It is found in the cytoplasm. It carries out the reaction tRNA(Glu) + L-glutamate + ATP = L-glutamyl-tRNA(Glu) + AMP + diphosphate. Functionally, catalyzes the attachment of glutamate to tRNA(Glu) in a two-step reaction: glutamate is first activated by ATP to form Glu-AMP and then transferred to the acceptor end of tRNA(Glu). This chain is Glutamate--tRNA ligase, found in Syntrophobacter fumaroxidans (strain DSM 10017 / MPOB).